Here is a 417-residue protein sequence, read N- to C-terminus: NADH-quinone oxidoreductase subunit D (417 aa).

The protein belongs to the complex I 49 kDa subunit family. As to quaternary structure, NDH-1 is composed of 14 different subunits. Subunits NuoB, C, D, E, F, and G constitute the peripheral sector of the complex.

Its subcellular location is the cell inner membrane. It catalyses the reaction a quinone + NADH + 5 H(+)(in) = a quinol + NAD(+) + 4 H(+)(out). NDH-1 shuttles electrons from NADH, via FMN and iron-sulfur (Fe-S) centers, to quinones in the respiratory chain. The immediate electron acceptor for the enzyme in this species is believed to be ubiquinone. Couples the redox reaction to proton translocation (for every two electrons transferred, four hydrogen ions are translocated across the cytoplasmic membrane), and thus conserves the redox energy in a proton gradient. This is NADH-quinone oxidoreductase subunit D from Francisella tularensis subsp. tularensis (strain FSC 198).